The following is a 179-amino-acid chain: Large ribosomal subunit protein uL6 (179 aa).

The protein belongs to the universal ribosomal protein uL6 family. Part of the 50S ribosomal subunit.

Its function is as follows. This protein binds to the 23S rRNA, and is important in its secondary structure. It is located near the subunit interface in the base of the L7/L12 stalk, and near the tRNA binding site of the peptidyltransferase center. The polypeptide is Large ribosomal subunit protein uL6 (Prochlorococcus marinus (strain NATL2A)).